We begin with the raw amino-acid sequence, 424 residues long: Dihydroorotase (424 aa).

Residues histidine 58 and histidine 60 each coordinate Zn(2+). Substrate-binding positions include histidine 60 to arginine 62, asparagine 92, and asparagine 276. A Zn(2+)-binding site is contributed by aspartate 303. Aspartate 303 is a catalytic residue. Residues histidine 307 and phenylalanine 321–glycine 322 each bind substrate.

Belongs to the metallo-dependent hydrolases superfamily. DHOase family. Class I DHOase subfamily. Requires Zn(2+) as cofactor.

The enzyme catalyses (S)-dihydroorotate + H2O = N-carbamoyl-L-aspartate + H(+). It functions in the pathway pyrimidine metabolism; UMP biosynthesis via de novo pathway; (S)-dihydroorotate from bicarbonate: step 3/3. In terms of biological role, catalyzes the reversible cyclization of carbamoyl aspartate to dihydroorotate. This is Dihydroorotase from Staphylococcus aureus (strain COL).